Reading from the N-terminus, the 166-residue chain is Large ribosomal subunit protein uL10 (166 aa).

Belongs to the universal ribosomal protein uL10 family. As to quaternary structure, part of the ribosomal stalk of the 50S ribosomal subunit. The N-terminus interacts with L11 and the large rRNA to form the base of the stalk. The C-terminus forms an elongated spine to which L12 dimers bind in a sequential fashion forming a multimeric L10(L12)X complex.

In terms of biological role, forms part of the ribosomal stalk, playing a central role in the interaction of the ribosome with GTP-bound translation factors. This chain is Large ribosomal subunit protein uL10, found in Streptococcus sanguinis (strain SK36).